A 249-amino-acid chain; its full sequence is PF03932 family protein CutC (249 aa).

This sequence belongs to the CutC family.

Its subcellular location is the cytoplasm. The sequence is that of PF03932 family protein CutC from Bacteroides thetaiotaomicron (strain ATCC 29148 / DSM 2079 / JCM 5827 / CCUG 10774 / NCTC 10582 / VPI-5482 / E50).